Here is a 452-residue protein sequence, read N- to C-terminus: Chromosomal replication initiator protein DnaA (452 aa).

The interval 1-72 (MPDMLTLWTD…LVEYAYQAAH (72 aa)) is domain I, interacts with DnaA modulators. A domain II region spans residues 72–114 (HEDIQPVLILENERQQQATLKAKTAPVAAGEPVEPTPTFMKET). Positions 115–331 (ALNSRYTFDT…GALARVQAYS (217 aa)) are domain III, AAA+ region. The ATP site is built by glycine 159, glycine 161, lysine 162, and threonine 163. A domain IV, binds dsDNA region spans residues 332–452 (QLMHQPIATD…IDSLKDDLRR (121 aa)).

Belongs to the DnaA family. As to quaternary structure, oligomerizes as a right-handed, spiral filament on DNA at oriC.

It localises to the cytoplasm. Plays an essential role in the initiation and regulation of chromosomal replication. ATP-DnaA binds to the origin of replication (oriC) to initiate formation of the DNA replication initiation complex once per cell cycle. Binds the DnaA box (a 9 base pair repeat at the origin) and separates the double-stranded (ds)DNA. Forms a right-handed helical filament on oriC DNA; dsDNA binds to the exterior of the filament while single-stranded (ss)DNA is stabiized in the filament's interior. The ATP-DnaA-oriC complex binds and stabilizes one strand of the AT-rich DNA unwinding element (DUE), permitting loading of DNA polymerase. After initiation quickly degrades to an ADP-DnaA complex that is not apt for DNA replication. Binds acidic phospholipids. The polypeptide is Chromosomal replication initiator protein DnaA (Levilactobacillus brevis (strain ATCC 367 / BCRC 12310 / CIP 105137 / JCM 1170 / LMG 11437 / NCIMB 947 / NCTC 947) (Lactobacillus brevis)).